The primary structure comprises 605 residues: UvrABC system protein C (605 aa).

The GIY-YIG domain maps to T13–V92. The region spanning S205 to A240 is the UVR domain.

This sequence belongs to the UvrC family. In terms of assembly, interacts with UvrB in an incision complex.

It is found in the cytoplasm. The UvrABC repair system catalyzes the recognition and processing of DNA lesions. UvrC both incises the 5' and 3' sides of the lesion. The N-terminal half is responsible for the 3' incision and the C-terminal half is responsible for the 5' incision. The polypeptide is UvrABC system protein C (Chlamydia caviae (strain ATCC VR-813 / DSM 19441 / 03DC25 / GPIC) (Chlamydophila caviae)).